A 289-amino-acid polypeptide reads, in one-letter code: Rhodopsin (289 aa).

Over 1-7 (YLVNPAA) the chain is Extracellular. Residues 8–32 (YAALGAYMFLLILIGFPINFLTLYV) traverse the membrane as a helical segment. Residues 33 to 44 (TLEHKKLRTPLN) lie on the Cytoplasmic side of the membrane. Residues 45–67 (YILLNLAVGNLFMVLGGFTTTMY) traverse the membrane as a helical segment. At 68–81 (TSMHGYFVLGRLGC) the chain is on the extracellular side. A disulfide bridge links Cys81 with Cys158. Residues 82–104 (NLEGFFATLGGEIALWSLVVLAI) traverse the membrane as a helical segment. A 'Ionic lock' involved in activated form stabilization motif is present at residues 105 to 107 (ERW). Residues 105 to 123 (ERWIVVCKPISKFRFTEDH) lie on the Cytoplasmic side of the membrane. A helical transmembrane segment spans residues 124 to 144 (AIMGLAFSWVMGLACAVPPLV). Over 145–173 (GWSRYIPEGMKCSCGVDYYTRAEGFNNES) the chain is Extracellular. Asn171 is a glycosylation site (N-linked (GlcNAc...) asparagine). The helical transmembrane segment at 174 to 195 (FVIYMFIVHFLIPLSVIFFCYG) threads the bilayer. The Cytoplasmic segment spans residues 196-223 (RLLCAVKEAAAAQQESETTQRAEKEVSR). A helical transmembrane segment spans residues 224-245 (MVVIMVIGFLVCWLPYASVAWW). Topologically, residues 246–257 (IFCNQGSDFGPI) are extracellular. The chain crosses the membrane as a helical span at residues 258–279 (FMTLPSFFAKRPAIYNPMIYIC). Lys267 carries the post-translational modification N6-(retinylidene)lysine. Over 280–289 (MNKQFRHCMI) the chain is Cytoplasmic.

The protein belongs to the G-protein coupled receptor 1 family. Opsin subfamily. In terms of processing, phosphorylated on some or all of the serine and threonine residues present in the C-terminal region. Post-translationally, contains one covalently linked retinal chromophore.

The protein localises to the membrane. It localises to the cell projection. Its subcellular location is the cilium. It is found in the photoreceptor outer segment. Photoreceptor required for image-forming vision at low light intensity. While most salt water fish species use retinal as chromophore, most freshwater fish use 3-dehydroretinal, or a mixture of retinal and 3-dehydroretinal. Light-induced isomerization of 11-cis to all-trans retinal triggers a conformational change that activates signaling via G-proteins. Subsequent receptor phosphorylation mediates displacement of the bound G-protein alpha subunit by arrestin and terminates signaling. This chain is Rhodopsin (rho), found in Cottinella boulengeri (Short-headed sculpin).